The primary structure comprises 252 residues: Probable endonuclease 4 (252 aa).

The Zn(2+) site is built by His56, His96, Glu129, Asp162, His165, His191, Asp204, His206, and Glu233.

The protein belongs to the AP endonuclease 2 family. Zn(2+) is required as a cofactor.

The enzyme catalyses Endonucleolytic cleavage to 5'-phosphooligonucleotide end-products.. Its function is as follows. Endonuclease IV plays a role in DNA repair. It cleaves phosphodiester bonds at apurinic or apyrimidinic (AP) sites, generating a 3'-hydroxyl group and a 5'-terminal sugar phosphate. In Mycobacterium leprae (strain Br4923), this protein is Probable endonuclease 4.